Here is a 360-residue protein sequence, read N- to C-terminus: Protein MGF 360-2L (360 aa).

It belongs to the asfivirus MGF 360 family.

Functionally, plays a role in virus cell tropism, and may be required for efficient virus replication in macrophages. This is Protein MGF 360-2L from Ornithodoros (relapsing fever ticks).